Here is a 282-residue protein sequence, read N- to C-terminus: 2-dehydro-3-deoxyphosphooctonate aldolase (282 aa).

It belongs to the KdsA family.

Its subcellular location is the cytoplasm. It carries out the reaction D-arabinose 5-phosphate + phosphoenolpyruvate + H2O = 3-deoxy-alpha-D-manno-2-octulosonate-8-phosphate + phosphate. The protein operates within carbohydrate biosynthesis; 3-deoxy-D-manno-octulosonate biosynthesis; 3-deoxy-D-manno-octulosonate from D-ribulose 5-phosphate: step 2/3. It functions in the pathway bacterial outer membrane biogenesis; lipopolysaccharide biosynthesis. The protein is 2-dehydro-3-deoxyphosphooctonate aldolase of Shewanella piezotolerans (strain WP3 / JCM 13877).